The chain runs to 443 residues: Protoheme IX farnesyltransferase, mitochondrial (443 aa).

A run of 7 helical transmembrane segments spans residues 174-194, 235-255, 257-277, 280-300, 309-329, 364-384, and 411-431; these read AAGF…LTSV, LAVS…TLGV, PLTG…YTPL, ISIA…VMGW, AGAF…FNAL, LLVL…FPIM, and LFFC…TCKR.

It belongs to the UbiA prenyltransferase family.

It is found in the mitochondrion membrane. The catalysed reaction is heme b + (2E,6E)-farnesyl diphosphate + H2O = Fe(II)-heme o + diphosphate. Converts protoheme IX and farnesyl diphosphate to heme O. This chain is Protoheme IX farnesyltransferase, mitochondrial (COX10), found in Pongo abelii (Sumatran orangutan).